Reading from the N-terminus, the 748-residue chain is Far upstream element-binding protein 2 (748 aa).

Residues 1–78 (MSDYNTGGPP…GIRKDAFADA (78 aa)) form a disordered region. Residue Ser2 is modified to N-acetylserine. The segment covering 8-17 (GPPPGPPPPA) has biased composition (pro residues). Composition is skewed to gly residues over residues 18–28 (GGGGGAAGAGG) and 36–69 (GAGDRGGGGPGGGGPGGGGASGGPSQPPGGGGPG). An Omega-N-methylarginine modification is found at Arg40. Lys88 carries the N6-acetyllysine modification. Residues 90–148 (GGDAATTVNNNTPDFGFGGQKRQLEDGDQPDSKKLASQGDSIGSQLGPIHPPPRTSMTE) form a disordered region. Position 101 is a phosphothreonine (Thr101). Positions 111 to 123 (RQLEDGDQPDSKK) are enriched in basic and acidic residues. Lys122 is covalently cross-linked (Glycyl lysine isopeptide (Lys-Gly) (interchain with G-Cter in SUMO1); alternate). Residue Lys122 forms a Glycyl lysine isopeptide (Lys-Gly) (interchain with G-Cter in SUMO2); alternate linkage. Phosphoserine occurs at positions 126, 130, 182, 185, 194, and 275. 3 KH domains span residues 145–209 (SMTE…KMML), 234–300 (GTVQ…CEMV), and 323–387 (GGGI…ARII). A disordered region spans residues 394–422 (LRSGPPGPPGAPGMPPGGRGRGRGQGNWG). Residues 398–408 (PPGPPGAPGMP) are compositionally biased toward pro residues. Gly residues predominate over residues 409-422 (PGGRGRGRGQGNWG). Arg412, Arg414, Arg416, and Arg443 each carry omega-N-methylarginine. The KH 4 domain maps to 425–492 (GGEMTFSIPT…QQIDHAKQLI (68 aa)). Ser481 carries the post-translational modification Phosphoserine. The segment at 498-570 (GPLCPVGPGP…HDPNKAAAAA (73 aa)) is disordered. Composition is skewed to pro residues over residues 502–521 (PVGPGPGGPGPAGPMGPFNP) and 529–543 (PGAPPHAGGPPPHQY). Repeat unit 1 spans residues 572–583 (DPNAAWAAYYSH). The segment at 572-685 (DPNAAWAAYY…SAAWAEYYRQ (114 aa)) is 4 X 12 AA imperfect repeats. A compositionally biased stretch (pro residues) spans 588–614 (PPGPVPGPAPAPAAPPAQGEPPQPPPT). Disordered stretches follow at residues 588–650 (PPGP…KAWE), 659–678 (VATGGGPGAPPGSQPDYSAA), and 689–735 (YYGQ…PALV). Tandem repeats lie at residues 618–629 (DYTKAWEEYYKK), 644–655 (DYTKAWEEYYKK), and 674–685 (DYSAAWAEYYRQ).

The protein belongs to the KHSRP family. Part of a ternary complex containing FUBP2, PTBP1, PTBP2 and HNRPH1. Interacts with PARN. Interacts with PQBP1.

It localises to the nucleus. The protein localises to the cytoplasm. In terms of biological role, binds to the dendritic targeting element and may play a role in mRNA trafficking. Part of a ternary complex that binds to the downstream control sequence (DCS) of the pre-mRNA. Mediates exon inclusion in transcripts that are subject to tissue-specific alternative splicing. May interact with single-stranded DNA from the far-upstream element (FUSE). May activate gene expression. Also involved in degradation of inherently unstable mRNAs that contain AU-rich elements (AREs) in their 3'-UTR, possibly by recruiting degradation machinery to ARE-containing mRNAs. This Mus musculus (Mouse) protein is Far upstream element-binding protein 2 (Khsrp).